The chain runs to 575 residues: Septation ring formation regulator EzrA (575 aa).

At 1–8 (MSNGQLIY) the chain is on the extracellular side. A helical transmembrane segment spans residues 9 to 27 (LMVAIAVILVLAYVVAIFL). Residues 28-575 (RKRNEGRLEA…YEKTRETIRF (548 aa)) are Cytoplasmic-facing. Coiled coils occupy residues 110-191 (QIDQ…FVTL), 265-301 (LYEA…LYDI), 354-416 (VRRI…IEKD), and 456-526 (TASN…IQEA).

It belongs to the EzrA family.

The protein resides in the cell membrane. Negative regulator of FtsZ ring formation; modulates the frequency and position of FtsZ ring formation. Inhibits FtsZ ring formation at polar sites. Interacts either with FtsZ or with one of its binding partners to promote depolymerization. In Streptococcus pneumoniae (strain JJA), this protein is Septation ring formation regulator EzrA.